A 446-amino-acid chain; its full sequence is Glutamyl-tRNA reductase (446 aa).

Residues 49–52 (TCNR), serine 109, 114–116 (ETQ), and glutamine 120 each bind substrate. Catalysis depends on cysteine 50, which acts as the Nucleophile. 189–194 (GAGETG) contacts NADP(+).

The protein belongs to the glutamyl-tRNA reductase family. In terms of assembly, homodimer.

It carries out the reaction (S)-4-amino-5-oxopentanoate + tRNA(Glu) + NADP(+) = L-glutamyl-tRNA(Glu) + NADPH + H(+). It participates in porphyrin-containing compound metabolism; protoporphyrin-IX biosynthesis; 5-aminolevulinate from L-glutamyl-tRNA(Glu): step 1/2. Its function is as follows. Catalyzes the NADPH-dependent reduction of glutamyl-tRNA(Glu) to glutamate 1-semialdehyde (GSA). This is Glutamyl-tRNA reductase from Exiguobacterium sibiricum (strain DSM 17290 / CCUG 55495 / CIP 109462 / JCM 13490 / 255-15).